Reading from the N-terminus, the 151-residue chain is Phosphoribosyl-AMP cyclohydrolase (151 aa).

Over residues 1-13 (MMTLTFASPPQNK) the composition is skewed to polar residues. Residues 1–20 (MMTLTFASPPQNKSDLETGP) form a disordered region. Residue D93 coordinates Mg(2+). C94 provides a ligand contact to Zn(2+). Mg(2+) contacts are provided by D95 and D97. Residues C112 and C119 each contribute to the Zn(2+) site.

It belongs to the PRA-CH family. In terms of assembly, homodimer. Mg(2+) is required as a cofactor. Zn(2+) serves as cofactor.

The protein localises to the cytoplasm. It catalyses the reaction 1-(5-phospho-beta-D-ribosyl)-5'-AMP + H2O = 1-(5-phospho-beta-D-ribosyl)-5-[(5-phospho-beta-D-ribosylamino)methylideneamino]imidazole-4-carboxamide. Its pathway is amino-acid biosynthesis; L-histidine biosynthesis; L-histidine from 5-phospho-alpha-D-ribose 1-diphosphate: step 3/9. Catalyzes the hydrolysis of the adenine ring of phosphoribosyl-AMP. This chain is Phosphoribosyl-AMP cyclohydrolase, found in Sinorhizobium medicae (strain WSM419) (Ensifer medicae).